The primary structure comprises 428 residues: Proline--tRNA ligase (428 aa).

Belongs to the class-II aminoacyl-tRNA synthetase family. ProS type 2 subfamily. Homodimer.

It localises to the cytoplasm. The enzyme catalyses tRNA(Pro) + L-proline + ATP = L-prolyl-tRNA(Pro) + AMP + diphosphate. Catalyzes the attachment of proline to tRNA(Pro) in a two-step reaction: proline is first activated by ATP to form Pro-AMP and then transferred to the acceptor end of tRNA(Pro). The polypeptide is Proline--tRNA ligase (Rickettsia typhi (strain ATCC VR-144 / Wilmington)).